A 62-amino-acid chain; its full sequence is Potassium channel toxin alpha-KTx 18.3 (62 aa).

An N-terminal signal peptide occupies residues 1 to 26 (MHFSGVAFILISMVLIGSIFETTVEA). 3 cysteine pairs are disulfide-bonded: Cys-34/Cys-53, Cys-39/Cys-58, and Cys-43/Cys-60.

It belongs to the short scorpion toxin superfamily. Potassium channel inhibitor family. Alpha-KTx 18 subfamily. In terms of tissue distribution, expressed by the venom gland.

It is found in the secreted. Probable voltage-gated potassium channel inhibitor. The polypeptide is Potassium channel toxin alpha-KTx 18.3 (Tityus discrepans (Venezuelan scorpion)).